The chain runs to 155 residues: MSRRGTAEEKTAKSDPIYRNRLVNMLVNRILKHGKKSLAYQILYRAMKKIQQKTETNPLSVLRQAIRGVTPDIAVKARRVGGSTHQVPIEIGSTQGKALAIRWLLGASRKRPGRNMAFKLSSELVDAAKGSGDAIRKKEETHRMAEANRAFAHFR.

This sequence belongs to the universal ribosomal protein uS7 family. In terms of assembly, part of the 30S ribosomal subunit.

It is found in the plastid. The protein resides in the chloroplast. Its function is as follows. One of the primary rRNA binding proteins, it binds directly to 16S rRNA where it nucleates assembly of the head domain of the 30S subunit. The chain is Small ribosomal subunit protein uS7c (rps7) from Euonymus alatus (Burning bush).